The primary structure comprises 267 residues: MSAQPKPQLMGHIIAGYPSFESSLYAALGICQAGASYLEVQFPFSDPNADGRVIEEACNKSIAQGFKVAQGFKLLHTLSQHINQDNKQPTRLIIMTYANLIFHYGIEAFIKEAKKCGVWGIIAPDLPIESDESLRILAKKHHIRIISLIAPKVSISRIKKIAKISDEIVYVVARAGITGEKTHIDKALFEWIRLIQKHCKKPIALGFGINSYEQVAALKDKVDIIVAGSYFVRFISELSTQSQLSPQDYMHKLQAHAQMLMGWDINE.

Residues Glu-39 and Asp-50 each act as proton acceptor in the active site.

The protein belongs to the TrpA family. In terms of assembly, tetramer of two alpha and two beta chains.

It catalyses the reaction (1S,2R)-1-C-(indol-3-yl)glycerol 3-phosphate + L-serine = D-glyceraldehyde 3-phosphate + L-tryptophan + H2O. It participates in amino-acid biosynthesis; L-tryptophan biosynthesis; L-tryptophan from chorismate: step 5/5. Functionally, the alpha subunit is responsible for the aldol cleavage of indoleglycerol phosphate to indole and glyceraldehyde 3-phosphate. In Helicobacter hepaticus (strain ATCC 51449 / 3B1), this protein is Tryptophan synthase alpha chain.